Consider the following 627-residue polypeptide: DNA mismatch repair protein MutL (627 aa).

Belongs to the DNA mismatch repair MutL/HexB family.

This protein is involved in the repair of mismatches in DNA. It is required for dam-dependent methyl-directed DNA mismatch repair. May act as a 'molecular matchmaker', a protein that promotes the formation of a stable complex between two or more DNA-binding proteins in an ATP-dependent manner without itself being part of a final effector complex. In Mesorhizobium japonicum (strain LMG 29417 / CECT 9101 / MAFF 303099) (Mesorhizobium loti (strain MAFF 303099)), this protein is DNA mismatch repair protein MutL.